The following is a 370-amino-acid chain: Type II restriction enzyme MjaII (370 aa).

The protein belongs to the TdeIII type II restriction endonuclease family.

It catalyses the reaction Endonucleolytic cleavage of DNA to give specific double-stranded fragments with terminal 5'-phosphates.. Functionally, a P subtype restriction enzyme that recognizes the double-stranded sequence 5'-GGNCC-3'; the cleavage site is unknown. The chain is Type II restriction enzyme MjaII (mjaIIR) from Methanocaldococcus jannaschii (strain ATCC 43067 / DSM 2661 / JAL-1 / JCM 10045 / NBRC 100440) (Methanococcus jannaschii).